The chain runs to 407 residues: Acetate kinase (407 aa).

Asparagine 10 lines the Mg(2+) pocket. Lysine 17 contacts ATP. Residue arginine 91 coordinates substrate. The active-site Proton donor/acceptor is the aspartate 150. Residues 210 to 214, 285 to 287, and 338 to 342 contribute to the ATP site; these read HLGNG, DCR, and GIGEN. Residue glutamate 392 coordinates Mg(2+).

This sequence belongs to the acetokinase family. In terms of assembly, homodimer. It depends on Mg(2+) as a cofactor. The cofactor is Mn(2+).

The protein resides in the cytoplasm. The catalysed reaction is acetate + ATP = acetyl phosphate + ADP. It functions in the pathway metabolic intermediate biosynthesis; acetyl-CoA biosynthesis; acetyl-CoA from acetate: step 1/2. Catalyzes the formation of acetyl phosphate from acetate and ATP. Can also catalyze the reverse reaction. In Mannheimia succiniciproducens (strain KCTC 0769BP / MBEL55E), this protein is Acetate kinase.